The following is a 466-amino-acid chain: Histidine--tRNA ligase (466 aa).

The protein belongs to the class-II aminoacyl-tRNA synthetase family. In terms of assembly, homodimer.

The protein resides in the cytoplasm. The enzyme catalyses tRNA(His) + L-histidine + ATP = L-histidyl-tRNA(His) + AMP + diphosphate + H(+). The protein is Histidine--tRNA ligase of Bifidobacterium longum subsp. infantis (strain ATCC 15697 / DSM 20088 / JCM 1222 / NCTC 11817 / S12).